Consider the following 1097-residue polypeptide: Protein toll (1097 aa).

Positions 1-27 (MSRLKAASELALLVIILQLLQWPGSEA) are cleaved as a signal peptide. Residues 28–807 (SFGRDACSEM…ICPAEKGVFI (780 aa)) are Extracellular-facing. Cystine bridges form between Cys-34/Cys-45, Cys-43/Cys-56, and Cys-79/Cys-107. Residues Asn-80, Asn-140, and Asn-175 are each glycosylated (N-linked (GlcNAc...) asparagine). 15 LRR repeats span residues 175–195 (NLSH…LFDD), 198–219 (NLES…IFGK), 222–243 (KLKQ…DFEG), 246–267 (SVLG…VFAH), 270–291 (NVTD…LFDH), 294–314 (HLNE…PSRL), 320–340 (ELQI…LFEH), 343–364 (QITN…LLEH), 367–388 (NLLS…LFAH), 391–412 (NLTD…IFSN), 415–436 (NLVT…AFVS), 439–460 (GLRH…LDIM), 474–495 (GLLT…WKNT), 498–521 (QLRE…AFLS), and 523–544 (NRLH…EDVH). Residue Asn-235 is glycosylated (N-linked (GlcNAc...) asparagine). Residues Asn-270 and Asn-275 are each glycosylated (N-linked (GlcNAc...) asparagine). An N-linked (GlcNAc...) asparagine glycan is attached at Asn-346. Asn-391 carries N-linked (GlcNAc...) asparagine glycosylation. Residues Asn-482, Asn-508, and Asn-528 are each glycosylated (N-linked (GlcNAc...) asparagine). Residues 561–620 (NPLVCDCTILWFIQLVRGVHKPQYSRQFKLRTDRLVCSQPNVLEGTPVRQIEPQTLICPL) enclose the LRRCT 1 domain. Intrachain disulfides connect Cys-565–Cys-597, Cys-567–Cys-618, Cys-631–Cys-637, and Cys-635–Cys-650. The LRRNT domain maps to 622–663 (FSDDPRERKCPRGCNCHVRTYDKALVINCHSGNLTHVPRLPN). 6 N-linked (GlcNAc...) asparagine glycosylation sites follow: Asn-654, Asn-677, Asn-703, Asn-715, Asn-730, and Asn-738. 3 LRR repeats span residues 669–690 (QLME…NTPG), 693–713 (SVTS…DQLP), and 715–738 (NLTH…GFLN). Positions 751 to 801 (NPWMCDCTAKPLLLFTQDNFERIGDRNEMMCVNAEMPTRMVELSTNDICPA) constitute an LRRCT 2 domain. 2 cysteine pairs are disulfide-bonded: Cys-755-Cys-781 and Cys-757-Cys-799. The helical transmembrane segment at 808–828 (ALAVVIALTGLLAGFTAALYY) threads the bilayer. Over 829 to 1097 (KFQTEIKIWL…INTNAKQSDV (269 aa)) the chain is Cytoplasmic. Residues 857–993 (KKFDAFISYS…WFWDKLRFAL (137 aa)) enclose the TIR domain.

The protein belongs to the Toll-like receptor family. In terms of assembly, in the absence of ligand, forms a low-affinity disulfide-linked homodimer. In the presence of ligand, crystal structures show one Tl molecule bound to a spaetzle C-106 homodimer. However, the active complex probably consists of two Tl molecules bound to a spaetzle C-106 homodimer. This is supported by in vitro experiments which also show binding of the spaetzle C-106 dimer to 2 Tl receptors. Ligand binding induces conformational changes in the extracellular domain of Tl. This may enable a secondary homodimerization interface at the C-terminus of the Tl extracellular domain. As to expression, in early embryos, concentrated in the pseudocleavage furrows that form transiently between nuclei before cellularization and in the cleavage furrows during cellularization (at protein level). Later, found on cells in the mesectoderm, stomodeum, proctodeum, anterior and posterior midguts, splanchnopleura, salivary gland placode and adjacent to the segmentally repeated tracheal placodes (at protein level). During and after germ band shortening, localized in a number of cell types, including the salivary gland, foregut, hindgut, Malpighian tubules and epidermis (at protein level). In embryos, high expression in M13 with comparatively low expression in M12.

It localises to the cell membrane. The protein resides in the cytoplasm. In terms of biological role, receptor for the cleaved activated form of spz, spaetzle C-106. Binding to spaetzle C-106 activates the Toll signaling pathway and induces expression of the antifungal peptide drosomycin. Component of the extracellular signaling pathway that establishes dorsal-ventral polarity in the embryo. Promotes heterophilic cellular adhesion. Involved in synaptic targeting of motoneurons RP5 and V to muscle 12 (M12); functions as a repulsive cue inhibiting motoneuron synapse formation on muscle 13 (M13) to guide RP5 and V to the neighboring M12, where its expression is repressed by tey. May also function in embryonic neuronal survival and the synaptic targeting of SNa motoneurons. This chain is Protein toll, found in Drosophila melanogaster (Fruit fly).